A 395-amino-acid polypeptide reads, in one-letter code: Scyllo-inosose 3-dehydrogenase (395 aa).

Cys66 contacts Zn(2+). Catalysis depends on charge relay system residues Ser68 and His71. Residues His95, Glu96, Cys131, Cys134, Cys137, Cys145, and Glu193 each coordinate Zn(2+). NAD(+)-binding residues include Ile223, Glu243, and Arg248.

Belongs to the zinc-containing alcohol dehydrogenase family. Homodimer. Requires Zn(2+) as cofactor.

It catalyses the reaction scyllo-inosose + NAD(+) = 3-dehydro-scyllo-inosose + NADH + H(+). It participates in polyol metabolism; myo-inositol metabolism. Its function is as follows. Catalyzes the NAD(+)-dependent oxidation of scyllo-inosose (2-keto-myo-inositol) to 3-dehydro-scyllo-inosose (diketo-inositol), and thus probably functions in a myo-inositol degradation pathway together with IolG, IolN and IolO. Has no activity on myo-inositol, D-chiro-inositol and 1-keto-D-chiro-inositol. The protein is Scyllo-inosose 3-dehydrogenase of Thermotoga maritima (strain ATCC 43589 / DSM 3109 / JCM 10099 / NBRC 100826 / MSB8).